Reading from the N-terminus, the 538-residue chain is Casein kinase I homolog 1 (538 aa).

The tract at residues 39–61 (SPARSSMTATTAANSNSNSSRDD) is disordered. Residues 41–57 (ARSSMTATTAANSNSNS) are compositionally biased toward low complexity. The 285-residue stretch at 69 to 353 (YKIGKKIGEG…ETADGQYDWM (285 aa)) folds into the Protein kinase domain. Residues 75 to 83 (IGEGSFGVL) and lysine 98 each bind ATP. The active-site Proton acceptor is aspartate 188. 2 disordered regions span residues 366–428 (NKKP…KPKL) and 474–527 (QQQL…LAAS). Low complexity-rich tracts occupy residues 391–410 (QLQMQQLQMQQLQQQQQQQQ) and 474–498 (QQQLRATGQPPSQPQAQTQSQQFGA). 3 positions are modified to phosphoserine: serine 522, serine 523, and serine 527. 2 S-palmitoyl cysteine lipidation sites follow: cysteine 537 and cysteine 538.

This sequence belongs to the protein kinase superfamily. CK1 Ser/Thr protein kinase family. Casein kinase I subfamily. In terms of processing, palmitoylated by AKR1.

It localises to the cell membrane. It is found in the mitochondrion membrane. The catalysed reaction is L-seryl-[protein] + ATP = O-phospho-L-seryl-[protein] + ADP + H(+). It catalyses the reaction L-threonyl-[protein] + ATP = O-phospho-L-threonyl-[protein] + ADP + H(+). Casein kinases are operationally defined by their preferential utilization of acidic proteins such as caseins as substrates. This chain is Casein kinase I homolog 1 (YCK1), found in Saccharomyces cerevisiae (strain ATCC 204508 / S288c) (Baker's yeast).